The following is a 343-amino-acid chain: 3-isopropylmalate dehydrogenase (343 aa).

Substrate-binding residues include Arg-94, Arg-104, Arg-128, and Asp-218. Mg(2+) contacts are provided by Asp-218, Asp-242, and Asp-246. An NAD(+)-binding site is contributed by 278-290 (GSAPDIAGQNKAN).

This sequence belongs to the isocitrate and isopropylmalate dehydrogenases family. LeuB type 2 subfamily. As to quaternary structure, homodimer. Mg(2+) serves as cofactor. The cofactor is Mn(2+).

It localises to the cytoplasm. It carries out the reaction (2R,3S)-3-isopropylmalate + NAD(+) = 4-methyl-2-oxopentanoate + CO2 + NADH. The protein operates within amino-acid biosynthesis; L-leucine biosynthesis; L-leucine from 3-methyl-2-oxobutanoate: step 3/4. In terms of biological role, catalyzes the oxidation of 3-carboxy-2-hydroxy-4-methylpentanoate (3-isopropylmalate) to 3-carboxy-4-methyl-2-oxopentanoate. The product decarboxylates to 4-methyl-2 oxopentanoate. The sequence is that of 3-isopropylmalate dehydrogenase from Bifidobacterium longum (strain DJO10A).